The chain runs to 65 residues: Metallothionein (65 aa).

It belongs to the metallothionein superfamily. Type 4 family.

Its function is as follows. Metallothioneins have a high content of cysteine residues that bind various heavy metals. The sequence is that of Metallothionein from Paracentrotus lividus (Common sea urchin).